A 593-amino-acid polypeptide reads, in one-letter code: MFTAKNPFEDIVLKATSDELTSENWELNLEVCDKVSSGGDTAARNCIAAIQKRLVHRNANVQLYALTLADAVAKNCGLAAHQEIASRSFTQTLARICLDRNTHSTVKKRCSALVKEWAGEFDDQSLGLMKETYESLKSQDAVAEDETPAEPPREPTSEQLRAEDEELRRALELSIQDQGGRNAWPSYNTEQAETSGSSAPAAASSSSSAYQPTSQSLAPAQQQQQQQHDANHTNGTSSSAHAQPLSAATPPAVASRVRALYDFSPTEPGELAFSRGEVIRVLDSVYEHWWRGEVRGEAGIFPVNYVEVLPDPTPDELQREAQMEARIFSQAADIDRLLSKLRSLDPARDNLADDDELQELYQKSLAMRPKIVKLIDRYSNKITELKAMNDKFVHARGSFDEMMEQSLSRYNPGGHSSQDYLRPRPELQQHFSASSADYAQHPSYPTAHAYSVQQAQSASSAHDQIQYPFNPEQRHGYAQSAGAEPADPSYVQGSRLPSGPQPPQQITMAHQQQPHEQQYSSAPHDDEKRRLFERARAESEAFQQQHFQSQAHTSRSGYSGAYPSQPDASVLNQQMGNMNIGGSSSYASHPTGH.

One can recognise a VHS domain in the interval 15–144 (ATSDELTSEN…SLKSQDAVAE (130 aa)). Residues 136–251 (LKSQDAVAED…AQPLSAATPP (116 aa)) are disordered. Over residues 151–171 (PPREPTSEQLRAEDEELRRAL) the composition is skewed to basic and acidic residues. A UIM domain is found at 162 to 181 (AEDEELRRALELSIQDQGGR). The span at 175-193 (IQDQGGRNAWPSYNTEQAE) shows a compositional bias: polar residues. A compositionally biased stretch (low complexity) spans 194 to 227 (TSGSSAPAAASSSSSAYQPTSQSLAPAQQQQQQQ). Over residues 232-241 (HTNGTSSSAH) the composition is skewed to polar residues. Residues 252–311 (AVASRVRALYDFSPTEPGELAFSRGEVIRVLDSVYEHWWRGEVRGEAGIFPVNYVEVLPD) form the SH3 domain. Residues 474–593 (RHGYAQSAGA…SSYASHPTGH (120 aa)) form a disordered region. The segment covering 504–521 (QQITMAHQQQPHEQQYSS) has biased composition (polar residues). The span at 523–539 (PHDDEKRRLFERARAES) shows a compositional bias: basic and acidic residues. The span at 540-552 (EAFQQQHFQSQAH) shows a compositional bias: low complexity. The segment covering 566–593 (PDASVLNQQMGNMNIGGSSSYASHPTGH) has biased composition (polar residues).

It belongs to the STAM family. As to quaternary structure, component of the ESCRT-0 complex composed of HSE1 and VPS27.

Its subcellular location is the endosome membrane. Its function is as follows. Component of the ESCRT-0 complex which is the sorting receptor for ubiquitinated cargo proteins at the multivesicular body (MVB). This chain is Class E vacuolar protein-sorting machinery protein HSE1 (HSE1), found in Mycosarcoma maydis (Corn smut fungus).